Here is a 544-residue protein sequence, read N- to C-terminus: tRNA pseudouridine synthase 1 (544 aa).

Composition is skewed to basic and acidic residues over residues 1-10 and 31-61; these read MSEENLRPAY and RKADFDDEKDKKKDNDKHIDKRPKSGPRLDE. The segment at 1-74 is disordered; that stretch reads MSEENLRPAY…PLPKEPRLPK (74 aa). Asp-134 (nucleophile) is an active-site residue. A disordered region spans residues 495–544; sequence IPGLTDAPESNKKIKQRKRMEEEEAASKKAEISSTTQSNEPEVQPEAAAN. Over residues 513–525 the composition is skewed to basic and acidic residues; it reads RMEEEEAASKKAE.

It belongs to the tRNA pseudouridine synthase TruA family. Zn(2+) is required as a cofactor.

Its subcellular location is the nucleus. It carries out the reaction a uridine in tRNA = a pseudouridine in tRNA. It catalyses the reaction uridine in snRNA = pseudouridine in snRNA. The enzyme catalyses a uridine in mRNA = a pseudouridine in mRNA. Functionally, formation of pseudouridine at positions 27 and 28 in the anticodon stem and loop of transfer RNAs; at positions 34 and 36 of intron-containing precursor tRNA(Ile) and at position 35 in the intron-containing tRNA(Tyr). Catalyzes pseudouridylation at position 44 in U2 snRNA. Also catalyzes pseudouridylation of mRNAs. The sequence is that of tRNA pseudouridine synthase 1 (PUS1) from Saccharomyces cerevisiae (strain ATCC 204508 / S288c) (Baker's yeast).